Consider the following 218-residue polypeptide: 3,4-dihydroxy-2-butanone 4-phosphate synthase (218 aa).

D-ribulose 5-phosphate is bound by residues 37-38 (RE), Asp42, 150-154 (RSGHT), and Glu174. Glu38 lines the Mg(2+) pocket. His153 serves as a coordination point for Mg(2+).

This sequence belongs to the DHBP synthase family. In terms of assembly, homodimer. It depends on Mg(2+) as a cofactor. Mn(2+) serves as cofactor.

It carries out the reaction D-ribulose 5-phosphate = (2S)-2-hydroxy-3-oxobutyl phosphate + formate + H(+). It participates in cofactor biosynthesis; riboflavin biosynthesis; 2-hydroxy-3-oxobutyl phosphate from D-ribulose 5-phosphate: step 1/1. Catalyzes the conversion of D-ribulose 5-phosphate to formate and 3,4-dihydroxy-2-butanone 4-phosphate. The polypeptide is 3,4-dihydroxy-2-butanone 4-phosphate synthase (Hamiltonella defensa subsp. Acyrthosiphon pisum (strain 5AT)).